Consider the following 87-residue polypeptide: Small ribosomal subunit protein bS20 (87 aa).

The interval 1–27 (MANIKSAKKRAVQSEKRRKHNASRRSM) is disordered.

This sequence belongs to the bacterial ribosomal protein bS20 family.

Functionally, binds directly to 16S ribosomal RNA. This Pectobacterium carotovorum subsp. carotovorum (strain PC1) protein is Small ribosomal subunit protein bS20.